A 71-amino-acid chain; its full sequence is DNA-directed RNA polymerase subunit epsilon (71 aa).

The protein belongs to the RNA polymerase subunit epsilon family. As to quaternary structure, RNAP is composed of a core of 2 alpha, a beta and a beta' subunit. The core is associated with a delta subunit, and at least one of epsilon or omega. When a sigma factor is associated with the core the holoenzyme is formed, which can initiate transcription.

The catalysed reaction is RNA(n) + a ribonucleoside 5'-triphosphate = RNA(n+1) + diphosphate. Its function is as follows. A non-essential component of RNA polymerase (RNAP). This chain is DNA-directed RNA polymerase subunit epsilon, found in Geobacillus kaustophilus (strain HTA426).